The chain runs to 606 residues: RUN and FYVE domain-containing protein 2 (606 aa).

Positions 37–169 (DSDYPPLQQF…IDANLCVKGE (133 aa)) constitute an RUN domain. The stretch at 210 to 534 (EELNRQLNST…IKEANKALQG (325 aa)) forms a coiled coil. Residues 540–598 (DKEATHCKLCEKEFSLSKRKHHCRNCGEIFCNACSDNELPLPSSPKPVRVCDSCHALLI) form an FYVE-type zinc finger. Zn(2+) contacts are provided by Cys-546, Cys-549, Cys-562, Cys-565, Cys-570, Cys-573, Cys-590, and Cys-593.

In terms of assembly, interacts with BMX.

Its subcellular location is the nucleus. This Pongo abelii (Sumatran orangutan) protein is RUN and FYVE domain-containing protein 2 (RUFY2).